Reading from the N-terminus, the 125-residue chain is Fluoride-specific ion channel FluC (125 aa).

The next 4 helical transmembrane spans lie at 7–27 (FFIV…MAVV), 36–56 (GFPY…GFLS), 63–83 (PYGR…FSTF), and 96–116 (FIFA…GVFC). 2 residues coordinate Na(+): G75 and T78.

The protein belongs to the fluoride channel Fluc/FEX (TC 1.A.43) family.

Its subcellular location is the cell inner membrane. It catalyses the reaction fluoride(in) = fluoride(out). Na(+) is not transported, but it plays an essential structural role and its presence is essential for fluoride channel function. Its function is as follows. Fluoride-specific ion channel. Important for reducing fluoride concentration in the cell, thus reducing its toxicity. The protein is Fluoride-specific ion channel FluC of Elusimicrobium minutum (strain Pei191).